We begin with the raw amino-acid sequence, 165 residues long: MLMPKKDRIAIYELLFKEGVMVAKKDVHMPKHPELADKNVPNLHVMKAMQSLKSRGYVKEQFAWRHFYWYLTNEGIQYLRDFLHLPPEIVPATLRRSRPETGRPRPKGLEGERPPRLPRGETDRDTYRRSAVPSGADKKAEAGAGAATEFQFRGGFGRGRGQAPQ.

The segment at 92 to 165 is disordered; that stretch reads ATLRRSRPET…FGRGRGQAPQ (74 aa). The segment covering 97–128 has biased composition (basic and acidic residues); the sequence is SRPETGRPRPKGLEGERPPRLPRGETDRDTYR. Low complexity predominate over residues 142–153; sequence AGAGAATEFQFR. A compositionally biased stretch (gly residues) spans 154-165; the sequence is GGFGRGRGQAPQ.

The protein belongs to the eukaryotic ribosomal protein eS10 family. Component of the small ribosomal subunit.

The protein resides in the cytoplasm. It is found in the nucleus. Its subcellular location is the nucleolus. Component of the 40S ribosomal subunit. The ribosome is a large ribonucleoprotein complex responsible for the synthesis of proteins in the cell. This chain is Small ribosomal subunit protein eS10 (rps10), found in Xenopus laevis (African clawed frog).